We begin with the raw amino-acid sequence, 1862 residues long: Protein RRP5 homolog (1862 aa).

Positions 1–56 (MANLEESFPRGGTRKLHKSEKSSQQVVEQDNLFDVSTEEGPIKRKKSQKGPAKTKK) are disordered. Ala2 carries the N-acetylalanine modification. Ser7 is subject to Phosphoserine. The span at 43-56 (KRKKSQKGPAKTKK) shows a compositional bias: basic residues. S1 motif domains lie at 83 to 171 (GMRI…LSVN), 187 to 258 (GMLL…LSVE), 281 to 346 (GLLV…LSLR), and 365 to 436 (GAVL…LSLR). Position 438 is a phosphoserine (Ser438). S1 motif domains are found at residues 453–522 (GTVV…MTLK), 542–611 (GLQT…LSFR), 636–707 (GQLV…LCRK), 729–798 (GMLL…LSLR), and 846–911 (GMVL…VSLH). Residues 999-1036 (SKRTRMPVQRDSETVDDKGEEKEEEEEEEEKEEENLTV) form a disordered region. Residues 1006-1019 (VQRDSETVDDKGEE) are compositionally biased toward basic and acidic residues. The segment covering 1020-1033 (KEEEEEEEEKEEEN) has biased composition (acidic residues). 4 consecutive S1 motif domains span residues 1047 to 1120 (GDKV…ISHP), 1160 to 1233 (GQTV…LSLI), 1241 to 1309 (GEVA…LSLR), and 1335 to 1407 (GQLL…LSLL). 2 disordered regions span residues 1406-1520 (LLPS…STEV) and 1545-1577 (REES…KAEK). 2 stretches are compositionally biased toward basic and acidic residues: residues 1423 to 1437 (PKQE…EGQK) and 1445 to 1454 (RREEKEEPQK). Lys1424 is covalently cross-linked (Glycyl lysine isopeptide (Lys-Gly) (interchain with G-Cter in SUMO2)). 2 positions are modified to phosphoserine: Ser1468 and Ser1490. Positions 1566–1577 (KERELEKQKAEK) are enriched in basic and acidic residues. 4 HAT repeats span residues 1590-1622 (GRQP…FHLQ), 1696-1728 (EKYK…FVLG), 1766-1798 (GDVE…MTIK), and 1800-1835 (GSQT…YEKQ).

As to quaternary structure, interacts with NF-kappa-B p50/NFKB1 and NF-kappa-B p65/RELA. Ubiquitous.

It is found in the nucleus. The protein resides in the nucleolus. Its function is as follows. Essential for the generation of mature 18S rRNA, specifically necessary for cleavages at sites A0, 1 and 2 of the 47S precursor. Directly interacts with U3 snoRNA. In Mus musculus (Mouse), this protein is Protein RRP5 homolog (Pdcd11).